The following is a 74-amino-acid chain: ATP synthase subunit c (74 aa).

The next 2 helical transmembrane spans lie at 8–28 and 52–72; these read FIGV…VSNI and IGAG…MLLI.

This sequence belongs to the ATPase C chain family. As to quaternary structure, F-type ATPases have 2 components, F(1) - the catalytic core - and F(0) - the membrane proton channel. F(1) has five subunits: alpha(3), beta(3), gamma(1), delta(1), epsilon(1). F(0) has three main subunits: a(1), b(2) and c(10-14). The alpha and beta chains form an alternating ring which encloses part of the gamma chain. F(1) is attached to F(0) by a central stalk formed by the gamma and epsilon chains, while a peripheral stalk is formed by the delta and b chains.

The protein localises to the cell inner membrane. Its function is as follows. F(1)F(0) ATP synthase produces ATP from ADP in the presence of a proton or sodium gradient. F-type ATPases consist of two structural domains, F(1) containing the extramembraneous catalytic core and F(0) containing the membrane proton channel, linked together by a central stalk and a peripheral stalk. During catalysis, ATP synthesis in the catalytic domain of F(1) is coupled via a rotary mechanism of the central stalk subunits to proton translocation. In terms of biological role, key component of the F(0) channel; it plays a direct role in translocation across the membrane. A homomeric c-ring of between 10-14 subunits forms the central stalk rotor element with the F(1) delta and epsilon subunits. This chain is ATP synthase subunit c, found in Rickettsia canadensis (strain McKiel).